Reading from the N-terminus, the 754-residue chain is Protein NUCLEOLAR FACTOR 1 (754 aa).

3 disordered regions span residues 1-56 (MAPN…EAMV), 69-166 (SLGS…ELST), and 390-413 (EDTD…QKSS). Residues 42-52 (SPEESSIEAES) are compositionally biased toward acidic residues. Residues 80 to 93 (MNKRRQREEEGKSD) are compositionally biased toward basic and acidic residues. Composition is skewed to acidic residues over residues 94-110 (TEED…ENSG) and 138-161 (DTQE…DEEV). The span at 402–413 (SKNGNSIKQKSS) shows a compositional bias: polar residues.

Belongs to the UTP25 family. In terms of assembly, component of the ribosomal small subunit (SSU) processome composed of at least 40 protein subunits and snoRNA U3. Interacts with THAL in the nucleus. In terms of tissue distribution, preferentially expressed in differentiating cells in young tissues such as floral buds, ovules, embryos, secondary roots, pollen, young seedlings and vascular bundles. Observed ubiquitously.

It localises to the nucleus. It is found in the nucleolus. Functionally, DEAD-box RNA helicase-like protein required for pre-18S rRNA processing, specifically at sites A0, A1, and A2. Involved in the control of rRNA expression. Required for embryo development and female gametogenesis. The polypeptide is Protein NUCLEOLAR FACTOR 1 (Arabidopsis thaliana (Mouse-ear cress)).